A 186-amino-acid polypeptide reads, in one-letter code: Large ribosomal subunit protein uL5 (186 aa).

It belongs to the universal ribosomal protein uL5 family. In terms of assembly, part of the 50S ribosomal subunit; part of the 5S rRNA/L5/L18/L25 subcomplex. Contacts the 5S rRNA and the P site tRNA. Forms a bridge to the 30S subunit in the 70S ribosome.

In terms of biological role, this is one of the proteins that bind and probably mediate the attachment of the 5S RNA into the large ribosomal subunit, where it forms part of the central protuberance. In the 70S ribosome it contacts protein S13 of the 30S subunit (bridge B1b), connecting the 2 subunits; this bridge is implicated in subunit movement. Contacts the P site tRNA; the 5S rRNA and some of its associated proteins might help stabilize positioning of ribosome-bound tRNAs. The polypeptide is Large ribosomal subunit protein uL5 (Karelsulcia muelleri (strain GWSS) (Sulcia muelleri)).